Reading from the N-terminus, the 328-residue chain is DNA-directed RNA polymerase subunit alpha (328 aa).

The tract at residues 1–231 is alpha N-terminal domain (alpha-NTD); it reads MIYQMQMPAK…EHVTFFADFS (231 aa). The alpha C-terminal domain (alpha-CTD) stretch occupies residues 252-328; sequence MRKLFNTKIE…MDITKYQMKG (77 aa).

It belongs to the RNA polymerase alpha chain family. In terms of assembly, homodimer. The RNAP catalytic core consists of 2 alpha, 1 beta, 1 beta' and 1 omega subunit. When a sigma factor is associated with the core the holoenzyme is formed, which can initiate transcription.

The enzyme catalyses RNA(n) + a ribonucleoside 5'-triphosphate = RNA(n+1) + diphosphate. In terms of biological role, DNA-dependent RNA polymerase catalyzes the transcription of DNA into RNA using the four ribonucleoside triphosphates as substrates. The sequence is that of DNA-directed RNA polymerase subunit alpha from Chlorobium limicola (strain DSM 245 / NBRC 103803 / 6330).